Here is a 630-residue protein sequence, read N- to C-terminus: Phosphomethylpyrimidine synthase (630 aa).

Residues Asn-227, Met-256, Tyr-285, His-321, 341–343 (SRG), 382–385 (DGLR), and Glu-421 contribute to the substrate site. Residue His-425 coordinates Zn(2+). Position 448 (Tyr-448) interacts with substrate. Position 489 (His-489) interacts with Zn(2+). Residues Cys-569, Cys-572, and Cys-577 each coordinate [4Fe-4S] cluster.

This sequence belongs to the ThiC family. In terms of assembly, homodimer. It depends on [4Fe-4S] cluster as a cofactor.

It carries out the reaction 5-amino-1-(5-phospho-beta-D-ribosyl)imidazole + S-adenosyl-L-methionine = 4-amino-2-methyl-5-(phosphooxymethyl)pyrimidine + CO + 5'-deoxyadenosine + formate + L-methionine + 3 H(+). Its pathway is cofactor biosynthesis; thiamine diphosphate biosynthesis. In terms of biological role, catalyzes the synthesis of the hydroxymethylpyrimidine phosphate (HMP-P) moiety of thiamine from aminoimidazole ribotide (AIR) in a radical S-adenosyl-L-methionine (SAM)-dependent reaction. In Hydrogenovibrio crunogenus (strain DSM 25203 / XCL-2) (Thiomicrospira crunogena), this protein is Phosphomethylpyrimidine synthase.